Reading from the N-terminus, the 314-residue chain is Homoserine kinase (314 aa).

ATP is bound at residue 95-105 (PHSRGLGSSAA).

This sequence belongs to the GHMP kinase family. Homoserine kinase subfamily.

Its subcellular location is the cytoplasm. The catalysed reaction is L-homoserine + ATP = O-phospho-L-homoserine + ADP + H(+). Its pathway is amino-acid biosynthesis; L-threonine biosynthesis; L-threonine from L-aspartate: step 4/5. In terms of biological role, catalyzes the ATP-dependent phosphorylation of L-homoserine to L-homoserine phosphate. The protein is Homoserine kinase of Mycolicibacterium vanbaalenii (strain DSM 7251 / JCM 13017 / BCRC 16820 / KCTC 9966 / NRRL B-24157 / PYR-1) (Mycobacterium vanbaalenii).